Here is a 242-residue protein sequence, read N- to C-terminus: Probable transcriptional regulatory protein Bphyt_1301 (242 aa).

The protein belongs to the TACO1 family.

It is found in the cytoplasm. This chain is Probable transcriptional regulatory protein Bphyt_1301, found in Paraburkholderia phytofirmans (strain DSM 17436 / LMG 22146 / PsJN) (Burkholderia phytofirmans).